The chain runs to 188 residues: UPF0301 protein PD_1276 (188 aa).

This sequence belongs to the UPF0301 (AlgH) family.

The sequence is that of UPF0301 protein PD_1276 from Xylella fastidiosa (strain Temecula1 / ATCC 700964).